The following is a 252-amino-acid chain: 3-dehydroquinate dehydratase (252 aa).

3-dehydroquinate-binding positions include S21, E46–R48, and R82. H143 (proton donor/acceptor) is an active-site residue. K170 acts as the Schiff-base intermediate with substrate in catalysis. The 3-dehydroquinate site is built by R213, S232, and Q236.

The protein belongs to the type-I 3-dehydroquinase family. Homodimer.

It carries out the reaction 3-dehydroquinate = 3-dehydroshikimate + H2O. The protein operates within metabolic intermediate biosynthesis; chorismate biosynthesis; chorismate from D-erythrose 4-phosphate and phosphoenolpyruvate: step 3/7. Involved in the third step of the chorismate pathway, which leads to the biosynthesis of aromatic amino acids. Catalyzes the cis-dehydration of 3-dehydroquinate (DHQ) and introduces the first double bond of the aromatic ring to yield 3-dehydroshikimate. This chain is 3-dehydroquinate dehydratase, found in Escherichia coli (strain K12 / MC4100 / BW2952).